The primary structure comprises 179 residues: Large ribosomal subunit protein uL5 (179 aa).

The protein belongs to the universal ribosomal protein uL5 family. In terms of assembly, part of the 50S ribosomal subunit; part of the 5S rRNA/L5/L18/L25 subcomplex. Contacts the 5S rRNA and the P site tRNA. Forms a bridge to the 30S subunit in the 70S ribosome.

Functionally, this is one of the proteins that bind and probably mediate the attachment of the 5S RNA into the large ribosomal subunit, where it forms part of the central protuberance. In the 70S ribosome it contacts protein S13 of the 30S subunit (bridge B1b), connecting the 2 subunits; this bridge is implicated in subunit movement. Contacts the P site tRNA; the 5S rRNA and some of its associated proteins might help stabilize positioning of ribosome-bound tRNAs. This is Large ribosomal subunit protein uL5 from Buchnera aphidicola subsp. Schizaphis graminum (strain Sg).